The sequence spans 271 residues: 60 kDa heat shock protein, mitochondrial (271 aa).

Residues S30 and S33 each carry the phosphoserine modification. An ATP-binding site is contributed by 50 to 54 (DGTTT). K83 carries the N6-acetyllysine modification. 3 positions are modified to N6-acetyllysine; alternate: K84, K97, and K112. Residues K84, K97, and K112 each carry the N6-succinyllysine; alternate modification. Residue K125 is modified to N6-acetyllysine. The residue at position 126 (K126) is an N6-acetyllysine; alternate. The residue at position 126 (K126) is an N6-succinyllysine; alternate. The residue at position 145 (K145) is an N6-acetyllysine. K175 is modified (N6-succinyllysine). N6-acetyllysine is present on residues K188 and K237. G257 is a binding site for ATP. At K270 the chain carries N6-acetyllysine.

This sequence belongs to the chaperonin (HSP60) family. As to quaternary structure, homoheptamer arranged in a ring structure. The functional units of these chaperonins consist of heptameric rings of the large subunit Hsp60, which function as a back-to-back double ring. Interacts with 2 heptameric Hsp10 rings to form the symmetrical football complex. Interacts with HRAS. Interacts with ATAD3A. Interacts with ETFBKMT and EEF1AKMT3. Interacts with MFHAS1. In terms of tissue distribution, detected at higher levels in caput epididymal spermatazoa than in cauda epididymal spermatazoa (at protein level).

It is found in the mitochondrion matrix. It catalyses the reaction ATP + H2O + a folded polypeptide = ADP + phosphate + an unfolded polypeptide.. Its function is as follows. Chaperonin implicated in mitochondrial protein import and macromolecular assembly. Together with Hsp10, facilitates the correct folding of imported proteins. May also prevent misfolding and promote the refolding and proper assembly of unfolded polypeptides generated under stress conditions in the mitochondrial matrix. The functional units of these chaperonins consist of heptameric rings of the large subunit Hsp60, which function as a back-to-back double ring. In a cyclic reaction, Hsp60 ring complexes bind one unfolded substrate protein per ring, followed by the binding of ATP and association with 2 heptameric rings of the co-chaperonin Hsp10. This leads to sequestration of the substrate protein in the inner cavity of Hsp60 where, for a certain period of time, it can fold undisturbed by other cell components. Synchronous hydrolysis of ATP in all Hsp60 subunits results in the dissociation of the chaperonin rings and the release of ADP and the folded substrate protein. The chain is 60 kDa heat shock protein, mitochondrial from Mesocricetus auratus (Golden hamster).